The chain runs to 427 residues: L-threonine dehydratase biosynthetic IlvA (427 aa).

Lys63 carries the N6-(pyridoxal phosphate)lysine modification. Residues Asn90, 193-197, and Ser319 contribute to the pyridoxal 5'-phosphate site; that span reads GGGGC. The region spanning 343-417 is the ACT-like domain; the sequence is HYFLVDFPQK…TEMHVETLQP (75 aa).

It belongs to the serine/threonine dehydratase family. Homotetramer. It depends on pyridoxal 5'-phosphate as a cofactor.

It catalyses the reaction L-threonine = 2-oxobutanoate + NH4(+). Its pathway is amino-acid biosynthesis; L-isoleucine biosynthesis; 2-oxobutanoate from L-threonine: step 1/1. In terms of biological role, catalyzes the anaerobic formation of alpha-ketobutyrate and ammonia from threonine in a two-step reaction. The first step involved a dehydration of threonine and a production of enamine intermediates (aminocrotonate), which tautomerizes to its imine form (iminobutyrate). Both intermediates are unstable and short-lived. The second step is the nonenzymatic hydrolysis of the enamine/imine intermediates to form 2-ketobutyrate and free ammonia. In the low water environment of the cell, the second step is accelerated by RidA. The chain is L-threonine dehydratase biosynthetic IlvA (ilvA) from Mycobacterium leprae (strain TN).